A 523-amino-acid polypeptide reads, in one-letter code: Tyrosine ammonia-lyase (523 aa).

The active-site Proton donor/acceptor is the tyrosine 60. Histidine 89 is a binding site for substrate. The segment at residues 149–151 (ASG) is a cross-link (5-imidazolinone (Ala-Gly)). Serine 150 carries the post-translational modification 2,3-didehydroalanine (Ser). Substrate is bound by residues arginine 303 and 432 to 436 (NAANQ).

It belongs to the PAL/histidase family. As to quaternary structure, homotetramer. Post-translationally, contains an active site 4-methylidene-imidazol-5-one (MIO), which is formed autocatalytically by cyclization and dehydration of residues Ala-Ser-Gly.

The enzyme catalyses L-tyrosine = (E)-4-coumarate + NH4(+). Functionally, catalyzes the non-oxidative deamination of L-tyrosine. Has very low phenylalanine ammonia-lyase activity (in vitro). The sequence is that of Tyrosine ammonia-lyase (hutH) from Cereibacter sphaeroides (strain ATCC 17023 / DSM 158 / JCM 6121 / CCUG 31486 / LMG 2827 / NBRC 12203 / NCIMB 8253 / ATH 2.4.1.) (Rhodobacter sphaeroides).